An 84-amino-acid polypeptide reads, in one-letter code: Esculentin-1SIa (84 aa).

A signal peptide spans 1-22 (MFTLKKPLLLIVLLGIISLSLC). Positions 23–36 (EQERAADEDEGSEI) are cleaved as a propeptide — removed in mature form. A disulfide bridge links Cys78 with Cys84.

Expressed by the skin glands.

It localises to the secreted. Functionally, has antimicrobial activity against Gram-negative bacterium E.coli ATCC 8739 (MIC=6.3 ug), against Gram positive bacteria S.aureus ATCC 6538 (MIC=3.1 ug), methicillin-resistant S.aureus ATCC 43300 (MIC=25 ug) and B.subtilis ATCC 6633 (MIC=25 ug). Has no activity against fungus C.albicans ATCC 90028. The protein is Esculentin-1SIa of Odorrana ishikawae (Ishikawa's frog).